The sequence spans 412 residues: Divalent metal cation transporter MntH (412 aa).

Over 1 to 19 (MTNYRVESSSGRAARKMRL) the chain is Cytoplasmic. A helical transmembrane segment spans residues 20–39 (ALMGPAFIAAIGYIDPGNFA). Topologically, residues 40–51 (TNIQAGASFGYQ) are periplasmic. A helical membrane pass occupies residues 52–71 (LLWVVVWANLMAMLIQILSA). Residues 72–95 (KLGIATGKNLAEQIRDHYPRPVVW) lie on the Cytoplasmic side of the membrane. The chain crosses the membrane as a helical span at residues 96–118 (FYWVQAEIIAMATDLAEFIGAAI). Residues 119–125 (GFKLILG) are Periplasmic-facing. The helical transmembrane segment at 126 to 145 (VSLLQGAVLTGIATFLILML) threads the bilayer. At 146 to 155 (QRRGQKPLEK) the chain is on the cytoplasmic side. A helical transmembrane segment spans residues 156–175 (VIGGLLLFVAAAYIVELIFS). Residues 176-196 (QPNLAQLGKGMVIPSLPTSEA) lie on the Periplasmic side of the membrane. Residues 197 to 220 (VFLAAGVLGATIMPHVIYLHSSLT) traverse the membrane as a helical segment. Topologically, residues 221–238 (QHLHGGSRQQRYSATKWD) are cytoplasmic. The helical transmembrane segment at 239-258 (VAIAMTIAGFVNLVMMATAA) threads the bilayer. Residues 259–276 (AAFHFSGHTGVADLDEAY) lie on the Periplasmic side of the membrane. Residues 277 to 297 (LTLQPLLSHAAATVFGLSLVA) traverse the membrane as a helical segment. Residues 298 to 327 (AGLSSTVVGTLAGQVVMQGFIRFHIPLWVR) are Cytoplasmic-facing. The chain crosses the membrane as a helical span at residues 328–344 (RTVTMLPSFIVILMGLD). The Periplasmic portion of the chain corresponds to 345-350 (PTRILV). Residues 351–370 (MSQVLLSFGIALALVPLLIF) traverse the membrane as a helical segment. At 371–387 (TSDSKLMGDLVNSKRVK) the chain is on the cytoplasmic side. The helical transmembrane segment at 388 to 406 (QTGWVIVVLVVALNIWLLV) threads the bilayer. Residues 407 to 412 (GTALGL) lie on the Periplasmic side of the membrane.

This sequence belongs to the NRAMP family.

It localises to the cell inner membrane. In terms of biological role, h(+)-stimulated, divalent metal cation uptake system. The polypeptide is Divalent metal cation transporter MntH (Shigella flexneri serotype 5b (strain 8401)).